Here is a 355-residue protein sequence, read N- to C-terminus: MNIVSWKDANDEVAGGATTRREREVKEDQEETEVRATSGKTVIKKQPTSISSSSSSWMKSKDPRIVRVSRAFGGKDRHSKVCTLRGLRDRRVRLSVPTAIQLYDLQERLGVDQPSKAVDWLLDAAKEEIDELPPLPISPENFSIFNHHQSFLNLGQRPGQDPTQLGFKINGCVQKSTTTSREENDREKGENDVVYTNNHHVGSYGTYHNLEHHHHHHQHLSLQADYHSHQLHSLVPFPSQILVCPMTTSPTTTTIQSLFPSSSSAGSGTMETLDPRQMVSHFQMPLMGNSSSSSSQNISTLYSLLHGSSSNNGGRDIDNRMSSVQFNRTNSTTTANMSRHLGSERCTSRGSDHHM.

The disordered stretch occupies residues 1–57 (MNIVSWKDANDEVAGGATTRREREVKEDQEETEVRATSGKTVIKKQPTSISSSSSSW). The TCP domain occupies 74-132 (GKDRHSKVCTLRGLRDRRVRLSVPTAIQLYDLQERLGVDQPSKAVDWLLDAAKEEIDEL). The tract at residues 329–355 (TNSTTTANMSRHLGSERCTSRGSDHHM) is disordered. Over residues 341-355 (LGSERCTSRGSDHHM) the composition is skewed to basic and acidic residues.

Interacts with AHL27 and AHL29. Interacts with SPL. Interacts with KIN10; KIN11 and FLZ3. As to expression, expressed in cotyledons, particularly in the vascular region, in leaves, buds, flowers and immature siliques, and, to a lower extent, in roots.

The protein localises to the nucleus. It localises to the plastid. Its subcellular location is the chloroplast. Plays a pivotal role in the control of morphogenesis of shoot organs by negatively regulating the expression of boundary-specific genes such as CUC genes, probably through the induction of miRNA (e.g. miR164). Binds to the 3'-ACC-5' repeats in the light-responsive promoter (LRP) of psbD, and activates its transcription. Participates in ovule development. The sequence is that of Transcription factor TCP13 (TCP13) from Arabidopsis thaliana (Mouse-ear cress).